The chain runs to 114 residues: Fumarate reductase subunit D (114 aa).

Transmembrane regions (helical) follow at residues 24-44, 50-70, and 92-112; these read VSAIFLPVVILIIGLLLPFGL, LITFAYSWIGKLVILVLTIFP, and GGFIFYGLATIYTVWVLFAVI.

The protein belongs to the FrdD family. In terms of assembly, part of an enzyme complex containing four subunits: a flavoprotein (FrdA), an iron-sulfur protein (FrdB), and two hydrophobic anchor proteins (FrdC and FrdD).

Its subcellular location is the cell inner membrane. Its function is as follows. Anchors the catalytic components of the fumarate reductase complex to the cell membrane, binds quinones. This Haemophilus influenzae (strain ATCC 51907 / DSM 11121 / KW20 / Rd) protein is Fumarate reductase subunit D.